The primary structure comprises 772 residues: MAEAHQAVAFQFTVTPDGVDFRLSREALRHIYLSGINSWKKRLIRIKNGILRGVYPGSPTSWLVVVMATVGSNYCKVDISMGLVHCIQRCLPTRYGSYGTPQTETLLSMVIFSTGVWATGIFLFRQTLKLLLSYHGWMFEMHSKTSHATKIWAICVRLLSSRRPMLYSFQTSLPKLPVPSVPATIHRYLDSVRPLLDDEAYFRMESLAKEFQDKIAPRLQKYLVLKSWWATNYVSDWWEEYVYLRGRSPIMVNSNYYAMDFVLIKNTSQQAARLGNTVHAMIMYRRKLDREEIKPVMALGMVPMCSYQMERMFNTTRIPGKETDLLQHLSESRHVAVYHKGRFFKVWLYEGSCLLKPRDLEMQFQRILDDTSPPQPGEEKLAALTAGGRVEWAEARQKFFSSGKNKMSLDTIERAAFFVALDEDSHCYNPDDEASLSLYGKSLLHGNCYNRWFDKSFTLISCKNGQLGLNTEHSWADAPIIGHLWEFVLATDTFHLGYTETGHCVGEPNTKLPPPQRMQWDIPEQCQTAIENSYQVAKALADDVELYCFQFLPFGKGLIKKCRTSPDAFVQIALQLAHFRDKGKFCLTYEASMTRMFREGRTETVRSCTSESTAFVRAMMTGSHKKQDLQDLFRKASEKHQNMYRLAMTGAGIDRHLFCLYIVSKYLGVRSPFLDEVLSEPWSLSTSQIPQFQICMFDPKQYPNHLGAGGGFGPVADHGYGVSYMIAGENTMFFHVSSKLSSSETNALRFGNHIRQALLDIADLFKISKTDS.

Over 1-47 (MAEAHQAVAFQFTVTPDGVDFRLSREALRHIYLSGINSWKKRLIRIK) the chain is Cytoplasmic. Residues 48-73 (NGILRGVYPGSPTSWLVVVMATVGSN) traverse the membrane as a helical segment. The Mitochondrial intermembrane portion of the chain corresponds to 74–102 (YCKVDISMGLVHCIQRCLPTRYGSYGTPQ). A helical membrane pass occupies residues 103 to 122 (TETLLSMVIFSTGVWATGIF). The Cytoplasmic segment spans residues 123 to 772 (LFRQTLKLLL…DLFKISKTDS (650 aa)). Histidine 473 (proton acceptor) is an active-site residue. Position 555-567 (555-567 (GKGLIKKCRTSPD)) interacts with CoA. (R)-carnitine is bound by residues tyrosine 589 and threonine 602.

Belongs to the carnitine/choline acetyltransferase family. In terms of tissue distribution, high expression in heart, skeletal muscle and brown adipose tissue. Also expressed in white adipose tissue, but not in liver.

It localises to the mitochondrion outer membrane. The catalysed reaction is (R)-carnitine + hexadecanoyl-CoA = O-hexadecanoyl-(R)-carnitine + CoA. It participates in lipid metabolism; fatty acid beta-oxidation. In terms of biological role, catalyzes the transfer of the acyl group of long-chain fatty acid-CoA conjugates onto carnitine, an essential step for the mitochondrial uptake of long-chain fatty acids and their subsequent beta-oxidation in the mitochondrion. In Rattus norvegicus (Rat), this protein is Carnitine O-palmitoyltransferase 1, muscle isoform (Cpt1b).